The sequence spans 346 residues: Holliday junction branch migration complex subunit RuvB (346 aa).

Positions 1–182 (MSERLVTSNE…FGVLCSMEYY (182 aa)) are large ATPase domain (RuvB-L). Residues leucine 21, arginine 22, glycine 63, lysine 66, threonine 67, threonine 68, 129-131 (EDY), arginine 172, tyrosine 182, and arginine 219 contribute to the ATP site. Threonine 67 is a Mg(2+) binding site. A small ATPAse domain (RuvB-S) region spans residues 183 to 253 (TDEQLKEIII…AAKKSLEILE (71 aa)). The head domain (RuvB-H) stretch occupies residues 256–346 (GEGFDRIDNK…DSKQCTLFEK (91 aa)). DNA is bound by residues arginine 311 and arginine 316.

Belongs to the RuvB family. As to quaternary structure, homohexamer. Forms an RuvA(8)-RuvB(12)-Holliday junction (HJ) complex. HJ DNA is sandwiched between 2 RuvA tetramers; dsDNA enters through RuvA and exits via RuvB. An RuvB hexamer assembles on each DNA strand where it exits the tetramer. Each RuvB hexamer is contacted by two RuvA subunits (via domain III) on 2 adjacent RuvB subunits; this complex drives branch migration. In the full resolvosome a probable DNA-RuvA(4)-RuvB(12)-RuvC(2) complex forms which resolves the HJ.

It localises to the cytoplasm. It carries out the reaction ATP + H2O = ADP + phosphate + H(+). The RuvA-RuvB-RuvC complex processes Holliday junction (HJ) DNA during genetic recombination and DNA repair, while the RuvA-RuvB complex plays an important role in the rescue of blocked DNA replication forks via replication fork reversal (RFR). RuvA specifically binds to HJ cruciform DNA, conferring on it an open structure. The RuvB hexamer acts as an ATP-dependent pump, pulling dsDNA into and through the RuvAB complex. RuvB forms 2 homohexamers on either side of HJ DNA bound by 1 or 2 RuvA tetramers; 4 subunits per hexamer contact DNA at a time. Coordinated motions by a converter formed by DNA-disengaged RuvB subunits stimulates ATP hydrolysis and nucleotide exchange. Immobilization of the converter enables RuvB to convert the ATP-contained energy into a lever motion, pulling 2 nucleotides of DNA out of the RuvA tetramer per ATP hydrolyzed, thus driving DNA branch migration. The RuvB motors rotate together with the DNA substrate, which together with the progressing nucleotide cycle form the mechanistic basis for DNA recombination by continuous HJ branch migration. Branch migration allows RuvC to scan DNA until it finds its consensus sequence, where it cleaves and resolves cruciform DNA. The sequence is that of Holliday junction branch migration complex subunit RuvB from Clostridium perfringens (strain ATCC 13124 / DSM 756 / JCM 1290 / NCIMB 6125 / NCTC 8237 / Type A).